The following is a 520-amino-acid chain: Sensory neuron membrane protein 1 (520 aa).

The Cytoplasmic portion of the chain corresponds to 1-5 (MKPKK). A helical transmembrane segment spans residues 6–26 (LGIIGGSLLAFGILICAIAFP). The Extracellular portion of the chain corresponds to 27 to 451 (PFLRSQVKKQ…KLKTVFKTIS (425 aa)). 3 N-linked (GlcNAc...) asparagine glycosylation sites follow: Asn-64, Asn-224, and Asn-268. 3 disulfide bridges follow: Cys-264-Cys-329, Cys-293-Cys-348, and Cys-331-Cys-337. A helical transmembrane segment spans residues 452 to 472 (IVGFMKWFTIVSGTCVSGAAA). The Cytoplasmic segment spans residues 473 to 520 (ALFFKNKDKNKLDITKVTPQKGEEKKWPNQMTISTIQSAAVPPNLDAD).

This sequence belongs to the CD36 family.

It is found in the cell membrane. In terms of biological role, plays an olfactory role that is not restricted to pheromone sensitivity. The sequence is that of Sensory neuron membrane protein 1 from Apis mellifera (Honeybee).